The sequence spans 292 residues: Acetyl-coenzyme A carboxylase carboxyl transferase subunit beta (292 aa).

A CoA carboxyltransferase N-terminal domain is found at 35 to 292 (VFSQCEQCNS…LKLHAKKVTS (258 aa)). The Zn(2+) site is built by C39, C42, C58, and C61. Residues 39–61 (CEQCNSAIYNKDLEHNYEVCPYC) form a C4-type zinc finger.

Belongs to the AccD/PCCB family. In terms of assembly, acetyl-CoA carboxylase is a heterohexamer composed of biotin carboxyl carrier protein (AccB), biotin carboxylase (AccC) and two subunits each of ACCase subunit alpha (AccA) and ACCase subunit beta (AccD). Requires Zn(2+) as cofactor.

Its subcellular location is the cytoplasm. The enzyme catalyses N(6)-carboxybiotinyl-L-lysyl-[protein] + acetyl-CoA = N(6)-biotinyl-L-lysyl-[protein] + malonyl-CoA. It functions in the pathway lipid metabolism; malonyl-CoA biosynthesis; malonyl-CoA from acetyl-CoA: step 1/1. Its function is as follows. Component of the acetyl coenzyme A carboxylase (ACC) complex. Biotin carboxylase (BC) catalyzes the carboxylation of biotin on its carrier protein (BCCP) and then the CO(2) group is transferred by the transcarboxylase to acetyl-CoA to form malonyl-CoA. This Acholeplasma laidlawii (strain PG-8A) protein is Acetyl-coenzyme A carboxylase carboxyl transferase subunit beta.